The chain runs to 341 residues: Putative methyltransferase YGR283C (341 aa).

Belongs to the class IV-like SAM-binding methyltransferase superfamily.

The protein resides in the nucleus. It is found in the nucleolus. The sequence is that of Putative methyltransferase YGR283C from Saccharomyces cerevisiae (strain ATCC 204508 / S288c) (Baker's yeast).